Consider the following 109-residue polypeptide: Parvalbumin alpha (109 aa).

EF-hand domains are found at residues 38 to 73 (KSKEIMQKVFHVLDQDQSGFIEKEELCLILKGFTPE) and 77 to 109 (LSDKETTALLAAGDKDGDGKIGVDEFVTLVSES). Ca(2+)-binding residues include aspartate 51, aspartate 53, serine 55, phenylalanine 57, glutamate 59, glutamate 62, aspartate 90, aspartate 92, aspartate 94, lysine 96, and glutamate 101.

This sequence belongs to the parvalbumin family.

Functionally, in muscle, parvalbumin is thought to be involved in relaxation after contraction. It binds two calcium ions. The protein is Parvalbumin alpha of Pelophylax lessonae (Pool frog).